Consider the following 67-residue polypeptide: Large ribosomal subunit protein bL31 (67 aa).

Zn(2+)-binding residues include C16, C18, C36, and C39.

This sequence belongs to the bacterial ribosomal protein bL31 family. Type A subfamily. Part of the 50S ribosomal subunit. Requires Zn(2+) as cofactor.

Binds the 23S rRNA. This Desulforudis audaxviator (strain MP104C) protein is Large ribosomal subunit protein bL31.